The following is a 141-amino-acid chain: Small ribosomal subunit protein uS12 (141 aa).

Position 102 is a 3-methylthioaspartic acid (Asp-102). The interval 115–141 (GDASGVEKRRQQRSLYGAKRPKKEASK) is disordered.

It belongs to the universal ribosomal protein uS12 family. As to quaternary structure, part of the 30S ribosomal subunit. Contacts proteins S8 and S17. May interact with IF1 in the 30S initiation complex.

With S4 and S5 plays an important role in translational accuracy. Its function is as follows. Interacts with and stabilizes bases of the 16S rRNA that are involved in tRNA selection in the A site and with the mRNA backbone. Located at the interface of the 30S and 50S subunits, it traverses the body of the 30S subunit contacting proteins on the other side and probably holding the rRNA structure together. The combined cluster of proteins S8, S12 and S17 appears to hold together the shoulder and platform of the 30S subunit. In Ureaplasma parvum serovar 3 (strain ATCC 27815 / 27 / NCTC 11736), this protein is Small ribosomal subunit protein uS12.